Reading from the N-terminus, the 321-residue chain is Probable 2-oxoglutarate-dependent dioxygenase AOP1.2 (321 aa).

The 106-residue stretch at 165-270 folds into the Fe2OG dioxygenase domain; that stretch reads TYYLTRLMKY…RYSTGLFSIP (106 aa). Fe cation-binding residues include histidine 194, aspartate 196, and histidine 251. Arginine 261 is a 2-oxoglutarate binding site.

This sequence belongs to the iron/ascorbate-dependent oxidoreductase family. It depends on Fe(2+) as a cofactor.

Probable 2-oxoglutarate-dependent dioxygenase that may be involved in glucosinolates biosynthesis. May play a role in the production of aliphatic glucosinolates. In Arabidopsis thaliana (Mouse-ear cress), this protein is Probable 2-oxoglutarate-dependent dioxygenase AOP1.2 (AOP1.2).